We begin with the raw amino-acid sequence, 310 residues long: Methionyl-tRNA formyltransferase (310 aa).

S112 to P115 contacts (6S)-5,6,7,8-tetrahydrofolate.

This sequence belongs to the Fmt family.

It catalyses the reaction L-methionyl-tRNA(fMet) + (6R)-10-formyltetrahydrofolate = N-formyl-L-methionyl-tRNA(fMet) + (6S)-5,6,7,8-tetrahydrofolate + H(+). In terms of biological role, attaches a formyl group to the free amino group of methionyl-tRNA(fMet). The formyl group appears to play a dual role in the initiator identity of N-formylmethionyl-tRNA by promoting its recognition by IF2 and preventing the misappropriation of this tRNA by the elongation apparatus. The polypeptide is Methionyl-tRNA formyltransferase (Pelagibacter ubique (strain HTCC1062)).